The sequence spans 193 residues: Segregation and condensation protein B (193 aa).

This sequence belongs to the ScpB family. As to quaternary structure, homodimer. Homodimerization may be required to stabilize the binding of ScpA to the Smc head domains. Component of a cohesin-like complex composed of ScpA, ScpB and the Smc homodimer, in which ScpA and ScpB bind to the head domain of Smc. The presence of the three proteins is required for the association of the complex with DNA.

The protein localises to the cytoplasm. Functionally, participates in chromosomal partition during cell division. May act via the formation of a condensin-like complex containing Smc and ScpA that pull DNA away from mid-cell into both cell halves. The chain is Segregation and condensation protein B from Shouchella clausii (strain KSM-K16) (Alkalihalobacillus clausii).